Here is a 98-residue protein sequence, read N- to C-terminus: Cystatin-B (98 aa).

Residue Met-1 is modified to N-acetylmethionine. A Secondary area of contact motif is present at residues Gln-46–Gly-50.

This sequence belongs to the cystatin family. Able to form dimers stabilized by noncovalent forces.

It is found in the cytoplasm. Its subcellular location is the nucleus. In terms of biological role, this is an intracellular thiol proteinase inhibitor. Tightly binding reversible inhibitor of cathepsins L, H and B. In Pongo pygmaeus (Bornean orangutan), this protein is Cystatin-B (CSTB).